The primary structure comprises 241 residues: MNLLQDQPAMGIDQTTLEHLARQWEDLAPEAILAEAVRCFGDKLVLASAFGPESIILLDMLVKVWPRPQAFFLETGFHFPETLALKDRVLARFPQLQLEVVGPLMSVAQQNAIYGERLHDRNPDHCCAIRKVEPLNRALAPYKAWIAGMRREQSPTRGQIGVVQWDSRRGMVKFNPLATWTHKQVWAYIVERDLPYNPLHDEGFPSIGCSPLNCTAPVADGADPRSGRWRGKAKTECGLHA.

Positions 221–241 are disordered; that stretch reads GADPRSGRWRGKAKTECGLHA. Cys237 functions as the Nucleophile; cysteine thiosulfonate intermediate in the catalytic mechanism.

This sequence belongs to the PAPS reductase family. CysH subfamily.

The protein resides in the cytoplasm. The catalysed reaction is [thioredoxin]-disulfide + sulfite + adenosine 3',5'-bisphosphate + 2 H(+) = [thioredoxin]-dithiol + 3'-phosphoadenylyl sulfate. The protein operates within sulfur metabolism; hydrogen sulfide biosynthesis; sulfite from sulfate: step 3/3. Its function is as follows. Catalyzes the formation of sulfite from phosphoadenosine 5'-phosphosulfate (PAPS) using thioredoxin as an electron donor. The polypeptide is Phosphoadenosine 5'-phosphosulfate reductase (Gloeobacter violaceus (strain ATCC 29082 / PCC 7421)).